We begin with the raw amino-acid sequence, 1100 residues long: Guanylate cyclase 2G (1100 aa).

The first 43 residues, 1–43, serve as a signal peptide directing secretion; sequence MASRTRSESPLEPRLYAGAGSRADHPSLVLMLSVVMLVTCLEA. The Extracellular portion of the chain corresponds to 44-481; sequence AKLTVGFHAP…VAGMTVTVTA (438 aa). 9 N-linked (GlcNAc...) asparagine glycosylation sites follow: Asn55, Asn85, Asn94, Asn217, Asn225, Asn238, Asn418, Asn440, and Asn443. The helical transmembrane segment at 482 to 502 threads the bilayer; sequence VIPTVTFLVLASAAAITGLML. At 503–1100 the chain is on the cytoplasmic side; it reads WRLRGKVQSH…EEEAKVSEIL (598 aa). One can recognise a Protein kinase domain in the interval 546 to 837; the sequence is SDTSTVKASA…EASPRGHVSI (292 aa). In terms of domain architecture, Guanylate cyclase spans 901 to 1031; sequence TIFFSDIVGF…DTVNMASRME (131 aa).

This sequence belongs to the adenylyl cyclase class-4/guanylyl cyclase family. In terms of assembly, homooligomer. In vitro interacts with NPR1/GC-A. Post-translationally, N-glycosylated. As to expression, highly expressed in testis.

The protein localises to the cell membrane. It catalyses the reaction GTP = 3',5'-cyclic GMP + diphosphate. This chain is Guanylate cyclase 2G (Gucy2g), found in Mus musculus (Mouse).